The sequence spans 957 residues: SH3 domain-binding protein 4-B (957 aa).

The SH3 1 domain occupies 54–113 (ENVKEVVAIKDYCPNNFTTLKFSKGEHLYVLDASGGDWWYAHNTTEMGYIPSSYVQPLNY). Residues 312-449 (TSIVCRLDSS…LEPVMYVVMV (138 aa)) form the ZU5 domain. An SH3 2 domain is found at 649–719 (TSLKYGKLIK…HAKNVLVVGK (71 aa)).

Homodimer or homooligomer.

Its subcellular location is the membrane. The protein localises to the clathrin-coated pit. It localises to the cytoplasmic vesicle. It is found in the clathrin-coated vesicle. The protein resides in the nucleus. Functionally, possible role in regulating endocytosis of the transferrin receptor at the plasma membrane. Alternatively, may function as a negative regulator of the amino acid-induced TOR signaling by inhibiting the formation of active Rag GTPase complexes. Preferentially binds inactive Rag GTPase complexes and prevents their interaction with the mTORC1 complex inhibiting its relocalization to lysosomes and its activation. Thereby, may indirectly regulate cell growth, proliferation and autophagy. The protein is SH3 domain-binding protein 4-B (sh3bp4-b) of Xenopus laevis (African clawed frog).